The following is a 507-amino-acid chain: Pyruvate kinase (507 aa).

R50 provides a ligand contact to substrate. Residues N52, S54, D84, and T85 each contribute to the K(+) site. 52–55 is an ATP binding site; the sequence is NFSH. Positions 91 and 177 each coordinate ATP. E242 provides a ligand contact to Mg(2+). G265, D266, and T298 together coordinate substrate. Residue D266 participates in Mg(2+) binding.

Belongs to the pyruvate kinase family. In terms of assembly, homotetramer. Requires Mg(2+) as cofactor. K(+) is required as a cofactor.

It catalyses the reaction pyruvate + ATP = phosphoenolpyruvate + ADP + H(+). The protein operates within carbohydrate degradation; glycolysis; pyruvate from D-glyceraldehyde 3-phosphate: step 5/5. The polypeptide is Pyruvate kinase (pyk) (Dictyostelium discoideum (Social amoeba)).